A 247-amino-acid chain; its full sequence is tRNA pseudouridine synthase A 1 (247 aa).

Asp53 (nucleophile) is an active-site residue. Tyr111 is a binding site for substrate.

Belongs to the tRNA pseudouridine synthase TruA family. As to quaternary structure, homodimer.

The enzyme catalyses uridine(38/39/40) in tRNA = pseudouridine(38/39/40) in tRNA. In terms of biological role, formation of pseudouridine at positions 38, 39 and 40 in the anticodon stem and loop of transfer RNAs. The chain is tRNA pseudouridine synthase A 1 from Bacillus cereus (strain ATCC 10987 / NRS 248).